The primary structure comprises 92 residues: uncharacterized protein (92 aa).

The protein to M.jannaschii MJ0782.1.

This is an uncharacterized protein from Methanothermobacter thermautotrophicus (strain ATCC 29096 / DSM 1053 / JCM 10044 / NBRC 100330 / Delta H) (Methanobacterium thermoautotrophicum).